A 348-amino-acid chain; its full sequence is Ninja-family protein AFP2 (348 aa).

The disordered stretch occupies residues 186 to 272 (DSDGGGATGG…VDRKGKGMAT (87 aa)). A compositionally biased stretch (gly residues) spans 187–197 (SDGGGATGGGS). Polar residues-rich tracts occupy residues 207 to 216 (KNQQGSSNSC) and 228 to 244 (CSSN…SVTR). Residues 247-267 (KVNENENEKRVRSEDSVDRKG) show a composition bias toward basic and acidic residues.

It belongs to the Ninja family. As to quaternary structure, forms a homodimer and heterodimer with AFP1 and AFP3. Interacts with ABI5/DPBF1, DPBF2, AREB3/DPBF3, EEL/DPBF4, ABF1, ABF3/DPBF5 and ABF4/AREB2.

Its subcellular location is the nucleus. Functionally, acts as a negative regulator of abscisic acid (ABA) response during germination through the ubiquitin-mediated proteolysis of ABI5/DPBF1. This chain is Ninja-family protein AFP2 (AFP2), found in Arabidopsis thaliana (Mouse-ear cress).